A 355-amino-acid polypeptide reads, in one-letter code: Uroporphyrinogen decarboxylase (355 aa).

Substrate is bound by residues 27–31 (RQAGR), phenylalanine 46, aspartate 77, tyrosine 154, serine 209, and histidine 327.

Belongs to the uroporphyrinogen decarboxylase family. Homodimer.

It is found in the cytoplasm. The catalysed reaction is uroporphyrinogen III + 4 H(+) = coproporphyrinogen III + 4 CO2. It functions in the pathway porphyrin-containing compound metabolism; protoporphyrin-IX biosynthesis; coproporphyrinogen-III from 5-aminolevulinate: step 4/4. Functionally, catalyzes the decarboxylation of four acetate groups of uroporphyrinogen-III to yield coproporphyrinogen-III. This is Uroporphyrinogen decarboxylase from Nitrosomonas europaea (strain ATCC 19718 / CIP 103999 / KCTC 2705 / NBRC 14298).